A 413-amino-acid polypeptide reads, in one-letter code: Protein MANNAN SYNTHESIS-RELATED (413 aa).

The Cytoplasmic segment spans residues 1–5; that stretch reads MNSME. Residues 6 to 26 form a helical; Signal-anchor for type II membrane protein membrane-spanning segment; sequence IRQAFAGLLTLSMFIMLGNMI. The Lumenal portion of the chain corresponds to 27–413; sequence KKDHFDYPAE…KNHLAYKCFC (387 aa). A glycan (N-linked (GlcNAc...) asparagine) is linked at N207. Substrate is bound at residue 255 to 257; that stretch reads DLR.

Belongs to the glycosyltransferase GT106 family. As to expression, highly and specifically expressed in the endosperm.

The protein localises to the golgi apparatus membrane. It participates in glycan biosynthesis. Glycosyltransferase involved in mannan biosynthesis. The chain is Protein MANNAN SYNTHESIS-RELATED from Trigonella foenum-graecum (Fenugreek).